A 361-amino-acid chain; its full sequence is Mycothiol acetyltransferase (361 aa).

N-acetyltransferase domains lie at 25 to 173 (PRVR…LPGS) and 195 to 361 (VTVL…AWKF). 1D-myo-inositol 2-(L-cysteinylamino)-2-deoxy-alpha-D-glucopyranoside is bound at residue Glu59. Residue 98 to 100 (LAV) participates in acetyl-CoA binding. Residues Glu229, Lys280, and Glu295 each contribute to the 1D-myo-inositol 2-(L-cysteinylamino)-2-deoxy-alpha-D-glucopyranoside site. Residues 299–301 (IGL) and 306–312 (QGRGLGR) contribute to the acetyl-CoA site. Tyr333 contributes to the 1D-myo-inositol 2-(L-cysteinylamino)-2-deoxy-alpha-D-glucopyranoside binding site. 338-343 (NAPAVH) contacts acetyl-CoA.

This sequence belongs to the acetyltransferase family. MshD subfamily. As to quaternary structure, monomer.

It catalyses the reaction 1D-myo-inositol 2-(L-cysteinylamino)-2-deoxy-alpha-D-glucopyranoside + acetyl-CoA = mycothiol + CoA + H(+). Catalyzes the transfer of acetyl from acetyl-CoA to desacetylmycothiol (Cys-GlcN-Ins) to form mycothiol. This is Mycothiol acetyltransferase from Corynebacterium kroppenstedtii (strain DSM 44385 / JCM 11950 / CIP 105744 / CCUG 35717).